A 365-amino-acid polypeptide reads, in one-letter code: Protein-glutamate methylesterase/protein-glutamine glutaminase 2 (365 aa).

One can recognise a Response regulatory domain in the interval 18 to 135; it reads RVLIVDDSAM…GQGLPAIMRD (118 aa). Position 69 is a 4-aspartylphosphate (aspartate 69). One can recognise a CheB-type methylesterase domain in the interval 162-355; that stretch reads GASEDWIHAL…ARMMLAAAAD (194 aa). Active-site residues include serine 174, histidine 200, and aspartate 297.

The protein belongs to the CheB family. In terms of processing, phosphorylated by CheA. Phosphorylation of the N-terminal regulatory domain activates the methylesterase activity.

The protein resides in the cytoplasm. The enzyme catalyses [protein]-L-glutamate 5-O-methyl ester + H2O = L-glutamyl-[protein] + methanol + H(+). The catalysed reaction is L-glutaminyl-[protein] + H2O = L-glutamyl-[protein] + NH4(+). Involved in chemotaxis. Part of a chemotaxis signal transduction system that modulates chemotaxis in response to various stimuli. Catalyzes the demethylation of specific methylglutamate residues introduced into the chemoreceptors (methyl-accepting chemotaxis proteins or MCP) by CheR. Also mediates the irreversible deamidation of specific glutamine residues to glutamic acid. The chain is Protein-glutamate methylesterase/protein-glutamine glutaminase 2 from Cereibacter sphaeroides (strain ATCC 17023 / DSM 158 / JCM 6121 / CCUG 31486 / LMG 2827 / NBRC 12203 / NCIMB 8253 / ATH 2.4.1.) (Rhodobacter sphaeroides).